The primary structure comprises 313 residues: Fe-S cluster assembly protein dre2 (313 aa).

Disordered stretches follow at residues 1 to 25 (MSIT…SQKR) and 151 to 187 (GRKK…AQNN). Residues 20-145 (NGSQKRNLLL…FEKPVQEAAV (126 aa)) are N-terminal SAM-like domain. Positions 146–203 (PLKLGGRKKKDKTNGVNGVQNGVATNGASTNGVGMFDPAQNNDDELIDEDALLSDDDL) are linker. The segment covering 159–177 (NGVNGVQNGVATNGASTNG) has biased composition (polar residues). Positions 213, 225, 228, and 230 each coordinate [2Fe-2S] cluster. Residues 213–230 (CVPETAKKRRRPCKDCTC) are fe-S binding site A. The [4Fe-4S] cluster site is built by Cys-276, Cys-279, Cys-287, and Cys-290. 2 consecutive short sequence motifs (cx2C motif) follow at residues 276–279 (CNSC) and 287–290 (CSSC). Residues 276 to 290 (CNSCSLGDAFRCSSC) are fe-S binding site B.

Belongs to the anamorsin family. In terms of assembly, monomer. Interacts with tah18. Interacts with mia40. [2Fe-2S] cluster is required as a cofactor. The cofactor is [4Fe-4S] cluster.

The protein resides in the cytoplasm. The protein localises to the mitochondrion intermembrane space. Its function is as follows. Component of the cytosolic iron-sulfur (Fe-S) protein assembly (CIA) machinery required for the maturation of extramitochondrial Fe-S proteins. Part of an electron transfer chain functioning in an early step of cytosolic Fe-S biogenesis, facilitating the de novo assembly of a [4Fe-4S] cluster on the scaffold complex cfd1-nbp35. Electrons are transferred to dre2 from NADPH via the FAD- and FMN-containing protein tah18. Tah18-dre2 are also required for the assembly of the diferric tyrosyl radical cofactor of ribonucleotide reductase (RNR), probably by providing electrons for reduction during radical cofactor maturation in the catalytic small subunit rnr2. This chain is Fe-S cluster assembly protein dre2, found in Aspergillus flavus (strain ATCC 200026 / FGSC A1120 / IAM 13836 / NRRL 3357 / JCM 12722 / SRRC 167).